The primary structure comprises 535 residues: Alkaline phosphatase, placental type (535 aa).

The N-terminal stretch at 1-22 (MLGPCMLLLLLLLGLRLQLSLG) is a signal peptide. Residue D64 coordinates Mg(2+). Zn(2+) contacts are provided by D64 and S114. Residue S114 is the Phosphoserine intermediate of the active site. C143 and C205 are oxidised to a cystine. A glycan (N-linked (GlcNAc...) asparagine) is linked at N144. S177 is a Mg(2+) binding site. E238 is a binding site for Ca(2+). N-linked (GlcNAc...) asparagine glycosylation occurs at N271. Positions 291, 292, and 307 each coordinate Ca(2+). A Mg(2+)-binding site is contributed by E333. Zn(2+)-binding residues include D338, H342, D379, and H380. The segment at 425–449 (DGARPDVTESESGSPEYRQQSAVPL) is disordered. Polar residues predominate over residues 434 to 446 (SESGSPEYRQQSA). Residue H454 coordinates Zn(2+). A disulfide bond links C489 and C496. D506 is lipidated: GPI-anchor amidated aspartate. The propeptide at 507–535 (AAHPGRSVVPALLPLLAGTLLLLETATAP) is removed in mature form. Residues 513 to 529 (SVVPALLPLLAGTLLLL) traverse the membrane as a helical segment.

Belongs to the alkaline phosphatase family. As to quaternary structure, homodimer. It depends on Mg(2+) as a cofactor. Zn(2+) is required as a cofactor. The cofactor is Ca(2+). In terms of tissue distribution, detected in placenta (at protein level).

Its subcellular location is the cell membrane. The enzyme catalyses a phosphate monoester + H2O = an alcohol + phosphate. Functionally, alkaline phosphatase that can hydrolyze various phosphate compounds. This Homo sapiens (Human) protein is Alkaline phosphatase, placental type.